Consider the following 233-residue polypeptide: Uracil-DNA glycosylase (233 aa).

Catalysis depends on aspartate 70, which acts as the Proton acceptor.

Belongs to the uracil-DNA glycosylase (UDG) superfamily. UNG family.

The protein localises to the cytoplasm. The catalysed reaction is Hydrolyzes single-stranded DNA or mismatched double-stranded DNA and polynucleotides, releasing free uracil.. Functionally, excises uracil residues from the DNA which can arise as a result of misincorporation of dUMP residues by DNA polymerase or due to deamination of cytosine. This Helicobacter pylori (strain HPAG1) protein is Uracil-DNA glycosylase.